Reading from the N-terminus, the 246-residue chain is Mitochondrial inner membrane protease ATP23 homolog (246 aa).

An a divalent metal cation-binding site is contributed by H125. Residue E126 is part of the active site. An a divalent metal cation-binding site is contributed by H129.

Belongs to the peptidase M76 family. Interacts with XRCC6.

This is Mitochondrial inner membrane protease ATP23 homolog from Homo sapiens (Human).